We begin with the raw amino-acid sequence, 463 residues long: Endoglucanase (463 aa).

The first 27 residues, 1 to 27 (MVEKRKIFTVLCACGIGFTSYTSCISA), serve as a signal peptide directing secretion. Residues 28–55 (AAIDNDTLINNGHKINSSIITNSSQVSA) constitute a propeptide that is removed on maturation. Catalysis depends on Glu130, which acts as the Proton donor. Asp191 serves as the catalytic Nucleophile.

This sequence belongs to the glycosyl hydrolase 8 (cellulase D) family. Post-translationally, the N- and the C-terminus may be subjected to proteolysis.

It carries out the reaction Endohydrolysis of (1-&gt;4)-beta-D-glucosidic linkages in cellulose, lichenin and cereal beta-D-glucans.. This chain is Endoglucanase, found in Bacillus sp. (strain KSM-330).